Reading from the N-terminus, the 185-residue chain is Ribosome-recycling factor (185 aa).

Belongs to the RRF family.

It localises to the cytoplasm. In terms of biological role, responsible for the release of ribosomes from messenger RNA at the termination of protein biosynthesis. May increase the efficiency of translation by recycling ribosomes from one round of translation to another. This Xanthomonas oryzae pv. oryzae (strain MAFF 311018) protein is Ribosome-recycling factor.